The primary structure comprises 451 residues: MAHIQFDYSKALSFFGEHEVAYMREAVRAAHKALHEKTGQGNDFLGWIDLPVDYDKEEFARIQKAAEKIRHDSDVLLVVGIGGSYLGARAAIEALNHSFFNQLPKEKRNAPQVIFVGQNISSTYLSDVLDLLDGKDVSVNVISKSGTTTEPAIAFRVFRDYLEKKYGKEEARKRIYATTDKERGALKTLANEEGYESFVIPDDVGGRFSVLTAVGLLPIAVSGLAIEDMMKGAADAREAFSTGELSENAAYQYAAIRNILYNKGKTIELLVNYEPHLHYVSEWWKQLFGESEGKDQKGIYPASVDFSTDLHSMGQYVQDGRRNLFETVLHVEAVDKHITIEEAESDLDGLNYLAGKTMDFVNKQAFKGTMLAHTDGNVPNLVVSIPKLDEYSFGYLVYFFEKAVAMSGYLLGVNPFDQPGVEAYKKNMFALLGKPGFEEEKNKLESRLTDN.

Position 38 is a phosphothreonine (Thr38). The active-site Proton donor is Glu290. Residues His311 and Lys425 contribute to the active site.

Belongs to the GPI family.

The protein resides in the cytoplasm. The catalysed reaction is alpha-D-glucose 6-phosphate = beta-D-fructose 6-phosphate. The protein operates within carbohydrate biosynthesis; gluconeogenesis. Its pathway is carbohydrate degradation; glycolysis; D-glyceraldehyde 3-phosphate and glycerone phosphate from D-glucose: step 2/4. Its function is as follows. Catalyzes the reversible isomerization of glucose-6-phosphate to fructose-6-phosphate. The protein is Glucose-6-phosphate isomerase of Shouchella clausii (strain KSM-K16) (Alkalihalobacillus clausii).